Here is a 558-residue protein sequence, read N- to C-terminus: Aurovertin biosynthesis cluster transcription factor aurF (558 aa).

It belongs to the POU transcription factor family. Class-3 subfamily.

The protein resides in the nucleus. Transcription factor that regulates the expression of the gene cluster that mediates the biosynthesis of aurovertins, fungal polyketides that exhibit potent inhibition of adenosine triphosphate synthase. The sequence is that of Aurovertin biosynthesis cluster transcription factor aurF from Calcarisporium arbuscula (Dendryphion arbuscula).